Reading from the N-terminus, the 574-residue chain is Interactor of HORMAD1 protein 1 (574 aa).

The interval 113–133 (GLSKQFEEKKRRATDQSDSET) is disordered. A compositionally biased stretch (basic and acidic residues) spans 117–127 (QFEEKKRRATD). A coiled-coil region spans residues 217–240 (MEMKSTLKNLEVLVVEQTKNLQQF). Disordered stretches follow at residues 267–324 (GHLK…GVWD), 372–393 (FSNLPSQRAGNGQGLMAQGASQ), and 426–457 (TEQKGRPCRKRRRGKKQQPQRSKRGGLLDRKQ). The span at 272–284 (STSQTSPSLTQSL) shows a compositional bias: low complexity. Over residues 372–381 (FSNLPSQRAG) the composition is skewed to polar residues. Residues 431–449 (RPCRKRRRGKKQQPQRSKR) show a composition bias toward basic residues. 3 positions are modified to phosphoserine: Ser476, Ser569, and Ser570.

Part of the MCD recombinosome complex, at least composed of IHO1, REC114 and MEI4. Interacts with REC114. Interacts with MEI4. Interacts with HORMAD1. Interacts with ANKRD31. As to expression, detected in spermatocytes and testis (at protein level).

The protein localises to the chromosome. Required for DNA double-strand breaks (DSBs) formation in unsynapsed regions during meiotic recombination. Probably acts by forming a complex with MEI4 and REC114, which activates DSBs formation in unsynapsed regions, an essential step to ensure completion of synapsis. Not required for HORMAD1 functions in pairing-independent synaptonemal complex formation, ATR recruitment to unsynapsed axes, meiotic silencing of unsynapsed chromatin (MSUC) or meiotic surveillance. The chain is Interactor of HORMAD1 protein 1 from Mus musculus (Mouse).